The primary structure comprises 344 residues: Flavonoid 7-O-methyltransferase 1B (344 aa).

Asp211 serves as a coordination point for S-adenosyl-L-methionine. His249 functions as the Proton acceptor in the catalytic mechanism.

It belongs to the class I-like SAM-binding methyltransferase superfamily. Cation-independent O-methyltransferase family. Homodimer.

It catalyses the reaction scutellarein + S-adenosyl-L-methionine = scutellarein 7-methyl ether + S-adenosyl-L-homocysteine. It carries out the reaction 4',7,8-trihydroxyflavone + S-adenosyl-L-methionine = 4',8-dihydroxy-7-methoxyflavone + S-adenosyl-L-homocysteine. The enzyme catalyses isorhamnetin + S-adenosyl-L-methionine = rhamnacene + S-adenosyl-L-homocysteine + H(+). The catalysed reaction is kaempferol + S-adenosyl-L-methionine = kaempferol 7-methyl ether + S-adenosyl-L-homocysteine + H(+). It catalyses the reaction (2S)-naringenin + S-adenosyl-L-methionine = (2S)-sakuranetin + S-adenosyl-L-homocysteine + H(+). It carries out the reaction quercetin + S-adenosyl-L-methionine = rhamnetin + S-adenosyl-L-homocysteine + H(+). The enzyme catalyses apigenin + S-adenosyl-L-methionine = genkwanin + S-adenosyl-L-homocysteine + H(+). The catalysed reaction is luteolin + S-adenosyl-L-methionine = luteolin 7-methyl ether + S-adenosyl-L-homocysteine + H(+). It functions in the pathway flavonoid metabolism. Functionally, flavonoid 7-O-methyltransferase involved in the biosynthesis of polymethoxylated flavonoids natural products such as pebrellin, aroma compounds which contribute to the flavor of peppermint, and exhibit pharmacological activities such as anti-allergic, anti-oxidant, antibacterial, anti-proliferative, and anti-inflammatory effects. Catalyzes S-adenosylmethionine-dependent regioselective 7-O-methylation of flavonoids; active on various hydroxylated flavonoid substrates, including luteolin (LUT), quercetin, kaempferol, isorhamnetin, apigenin (API), scutellarein (6-hydroxy-apigenin, 6-OH-API, SCU), 7,8,4'-trihydroxy-flavone and naringenin (NAR), and, with a lower efficiency, 7,8,3',4'-tetrahydroxy-flavone, taxifolin and hesperetin. This Mentha piperita (Peppermint) protein is Flavonoid 7-O-methyltransferase 1B.